The sequence spans 75 residues: Small ribosomal subunit protein bS18 (75 aa).

The protein belongs to the bacterial ribosomal protein bS18 family. Part of the 30S ribosomal subunit. Forms a tight heterodimer with protein bS6.

In terms of biological role, binds as a heterodimer with protein bS6 to the central domain of the 16S rRNA, where it helps stabilize the platform of the 30S subunit. This Shewanella halifaxensis (strain HAW-EB4) protein is Small ribosomal subunit protein bS18.